The following is a 214-amino-acid chain: Cutinase CUT2 (214 aa).

An N-terminal signal peptide occupies residues 1 to 18 (MQFSLSIATAILAATASA). Residues C40 and C117 are joined by a disulfide bond. The Nucleophile role is filled by S128. A disulfide bridge connects residues C179 and C186. Residue D183 is part of the active site. H196 serves as the catalytic Proton donor/acceptor.

This sequence belongs to the cutinase family. Post-translationally, the 2 disulfide bonds play a critical role in holding the catalytic residues in juxta-position; reduction of the disulfide bridges results in the complete inactivation of the enzyme.

The protein resides in the secreted. The enzyme catalyses cutin + H2O = cutin monomers.. Its function is as follows. Catalyzes the hydrolysis of complex carboxylic polyesters found in the cell wall of plants. Degrades cutin, a macromolecule that forms the structure of the plant cuticle. Required for efficient penetration of the host plant cuticle by the appressorium during the initial stage of fungal infection. This chain is Cutinase CUT2, found in Pyricularia oryzae (strain 70-15 / ATCC MYA-4617 / FGSC 8958) (Rice blast fungus).